Consider the following 365-residue polypeptide: PHD finger protein 6 (365 aa).

At S2 the chain carries N-acetylserine. 2 short sequence motifs (nuclear localization signal) span residues 13-16 and 129-133; these read RQRK and RKHKK. A C2HC pre-PHD-type 1 zinc finger spans residues 14 to 52; that stretch reads QRKCGFCKSNRDKECGQLLISENQKVAAHHKCMLFSSAL. Residues 14–132 are extended PHD1 domain (ePHD1); that stretch reads QRKCGFCKSN…IYMVYCRKHK (119 aa). A PHD-type 1 zinc finger spans residues 80 to 132; the sequence is LMCSLCHCPGATIGCDVKTCHRTYHYHCALHDKAQIREKPSQGIYMVYCRKHK. 3 positions are modified to phosphoserine: S138, S145, and S155. Residues 139–211 form a disordered region; that stretch reads EADLEESFNE…RSSPSDTRPK (73 aa). Residues 157–169 carry the Nucleolar localization signal motif; sequence KSKKKSRKGRPRK. A compositionally biased stretch (basic residues) spans 157–171; that stretch reads KSKKKSRKGRPRKTN. K173 participates in a covalent cross-link: Glycyl lysine isopeptide (Lys-Gly) (interchain with G-Cter in SUMO2). S183 and S199 each carry phosphoserine. The C2HC pre-PHD-type 2 zinc-finger motif lies at 209-249; sequence RPKCGFCHVGEEENQARGKLHIFNAKKAAAHYKCMLFSSGT. Residues 209-330 are extended PHD2 domain (ePHD2); sequence RPKCGFCHVG…IYKLYCKNHS (122 aa). K227 is covalently cross-linked (Glycyl lysine isopeptide (Lys-Gly) (interchain with G-Cter in SUMO2)). The PHD-type 2 zinc-finger motif lies at 278 to 330; the sequence is MKCTLCSQPGATIGCEIKACVKTYHYHCGVQDKAKYIENMSRGIYKLYCKNHS. A disordered region spans residues 330 to 365; the sequence is SGNDERDEEDEERESKSRGKVEIDQQQLTQQQLNGN. A compositionally biased stretch (basic and acidic residues) spans 342–352; that stretch reads RESKSRGKVEI. Residues 354 to 365 are compositionally biased toward low complexity; it reads QQQLTQQQLNGN. T358 is subject to Phosphothreonine.

As to quaternary structure, interacts with UBTF. Interacts with the NuRD complex component RBBP4 (via the nucleolar localization motif), the interaction mediates transcriptional repression activity.

Its subcellular location is the nucleus. The protein resides in the nucleolus. It is found in the chromosome. The protein localises to the centromere. It localises to the kinetochore. Functionally, transcriptional regulator that associates with ribosomal RNA promoters and suppresses ribosomal RNA (rRNA) transcription. In Bos taurus (Bovine), this protein is PHD finger protein 6 (PHF6).